A 414-amino-acid chain; its full sequence is Glutathione gamma-glutamylcysteinyltransferase (414 aa).

The 220-residue stretch at 37-256 folds into the Peptidase C83 domain; sequence QLKKSFYKRQ…GYVLLEPMHI (220 aa).

This sequence belongs to the phytochelatin synthase family.

The enzyme catalyses [Glu(-Cys)](n)-Gly + glutathione + H(+) = [Glu(-Cys)](n+1)-Gly + glycine. In terms of biological role, required for detoxification of heavy metals such as cadmium and arsenate. This is Glutathione gamma-glutamylcysteinyltransferase from Schizosaccharomyces pombe (strain 972 / ATCC 24843) (Fission yeast).